Consider the following 257-residue polypeptide: Imidazole glycerol phosphate synthase subunit HisF (257 aa).

Catalysis depends on residues Asp-11 and Asp-130.

It belongs to the HisA/HisF family. As to quaternary structure, heterodimer of HisH and HisF.

It localises to the cytoplasm. It carries out the reaction 5-[(5-phospho-1-deoxy-D-ribulos-1-ylimino)methylamino]-1-(5-phospho-beta-D-ribosyl)imidazole-4-carboxamide + L-glutamine = D-erythro-1-(imidazol-4-yl)glycerol 3-phosphate + 5-amino-1-(5-phospho-beta-D-ribosyl)imidazole-4-carboxamide + L-glutamate + H(+). It functions in the pathway amino-acid biosynthesis; L-histidine biosynthesis; L-histidine from 5-phospho-alpha-D-ribose 1-diphosphate: step 5/9. In terms of biological role, IGPS catalyzes the conversion of PRFAR and glutamine to IGP, AICAR and glutamate. The HisF subunit catalyzes the cyclization activity that produces IGP and AICAR from PRFAR using the ammonia provided by the HisH subunit. This chain is Imidazole glycerol phosphate synthase subunit HisF, found in Aeromonas salmonicida (strain A449).